Here is a 97-residue protein sequence, read N- to C-terminus: MKTLFVFAVGIMLSMRASAFTCPECRPELCGDPGYCEYGTTKDACDCCPVCFQGPGGYCGGPEDVFGICADGFACVPLVGERDSQDPEIVGTCVKIP.

The signal sequence occupies residues 1–19; that stretch reads MKTLFVFAVGIMLSMRASA. An IGFBP N-terminal domain is found at 20–96; the sequence is FTCPECRPEL…PEIVGTCVKI (77 aa). Residue T21 is glycosylated (O-linked (GalNAc...) threonine). Disulfide bonds link C22–C45, C25–C47, C30–C48, C36–C51, C59–C75, and C69–C93.

As to expression, expressed in hemocytes.

Its subcellular location is the secreted. Functionally, has a role in the innate immune system. This Cupiennius salei (American wandering spider) protein is Single insulin-like growth factor-binding domain protein-1.